The following is a 502-amino-acid chain: ATP synthase subunit alpha (502 aa).

A disordered region spans residues 115 to 134; sequence IDGQGPINTTKTRPVEQKAT. Residue 169–176 coordinates ATP; sequence GDRQTGKT.

This sequence belongs to the ATPase alpha/beta chains family. As to quaternary structure, F-type ATPases have 2 components, CF(1) - the catalytic core - and CF(0) - the membrane proton channel. CF(1) has five subunits: alpha(3), beta(3), gamma(1), delta(1), epsilon(1). CF(0) has three main subunits: a(1), b(2) and c(9-12). The alpha and beta chains form an alternating ring which encloses part of the gamma chain. CF(1) is attached to CF(0) by a central stalk formed by the gamma and epsilon chains, while a peripheral stalk is formed by the delta and b chains.

It localises to the cell membrane. It carries out the reaction ATP + H2O + 4 H(+)(in) = ADP + phosphate + 5 H(+)(out). Produces ATP from ADP in the presence of a proton gradient across the membrane. The alpha chain is a regulatory subunit. This is ATP synthase subunit alpha from Staphylococcus haemolyticus (strain JCSC1435).